The sequence spans 402 residues: Putative F-box protein At3g20030 (402 aa).

One can recognise an F-box domain in the interval 1–56; that stretch reads MTMMSDLSQDLLEEILSRVPRTSLGAVRSTCKRWNTLFKDRILCKAEETRDQFRFI.

The protein is Putative F-box protein At3g20030 of Arabidopsis thaliana (Mouse-ear cress).